Here is a 180-residue protein sequence, read N- to C-terminus: UPF0340 protein RBAM_034070 (180 aa).

It belongs to the UPF0340 family.

The chain is UPF0340 protein RBAM_034070 from Bacillus velezensis (strain DSM 23117 / BGSC 10A6 / LMG 26770 / FZB42) (Bacillus amyloliquefaciens subsp. plantarum).